The sequence spans 514 residues: Probable type III restriction-modification enzyme HindVIP Res subunit (514 aa).

The protein belongs to the type III restriction-modification system Res protein family. Contains two different subunits: Res and Mod. Requires Mg(2+) as cofactor. S-adenosyl-L-methionine is required as a cofactor.

It carries out the reaction Endonucleolytic cleavage of DNA to give specific double-stranded fragments with terminal 5'-phosphates.. In terms of biological role, a type III restriction enzyme that recognizes 2 inversely oriented double-stranded sequences 5'-CGAAT-3' and cleaves 25-27 base pairs downstream. After binding to one recognition site undergoes random one-dimensional diffusion along DNA until it collides with a stationary enzyme bound to the second DNA site, which is when DNA cleavage occurs. DNA restriction requires both the Res and Mod subunits. In Haemophilus influenzae (strain ATCC 51907 / DSM 11121 / KW20 / Rd), this protein is Probable type III restriction-modification enzyme HindVIP Res subunit.